The chain runs to 79 residues: M-myrmicitoxin(01)-Tb1a (79 aa).

A signal peptide spans 1-26 (MKLSFLSLVLAIILVMALMYTPHAEA). Residues 27–56 (KAWADADADATAAADADADAVADALADAVA) constitute a propeptide that is removed on maturation. Val-76 is subject to Valine amide.

Belongs to the formicidae venom precursor-01 superfamily. Post-translationally, the C-terminal amidation is important for antimicrobial activity, since a non-amidated synthetic peptide shows a reduced antimicrobial activity (2-20-fold depending on the strain tested). The amidation may play a positive role in the peptide conformation, since amidated peptide shows an increase of about 5% of helical content. As to expression, expressed by the venom gland.

It localises to the secreted. It is found in the target cell membrane. Functionally, antimicrobial peptide that shows antimicrobial activities against all microorganisms tested with minimal inhibitory concentrations (MICs) values ranging from 0.45 to 97.5 umol/L. This peptide kills the microorganisms by permeabilizating the membranes. It shows a very weak hemolytic activity (HC(50)=325 umol/L) and weak cytotoxicity against human lymphocytes (LC(50)=67.8 umol/L). Gram-negative bacteria tested are E.coli (MIC=24.4 umol/L), C.sakazakii (MIC=5.8 umol/L), P.aeruginosa (MIC=8.7-12.2 umol/L), S.enterica (MIC=5.4 umol/L), and H.pylori (MIC=0.99-3.9 umol/L). Gram-positive bacteria tested are E.hirae (MIC=12.2 umol/L), S.aureus (MIC=3.0-6.4 umol/L), methicillin-resistant S.aureus (MRSA) (MIC=8.7 umol/L), S.xylosus (MIC=0.45-1.3 umol/L), and B.subtilis (MIC=24.4 umol/L). Fungi tested are A.niger (MIC=0.75 umol/L), C.albicans (MIC=17.3 umol/L), G.candidum (MIC=97.5 umol/L), and S.cerevisiae (MIC=6.1 umol/L). Finally the parasite tested is L.infantum (MIC=1.5 umol/L). This Tetramorium bicarinatum (Tramp ant) protein is M-myrmicitoxin(01)-Tb1a.